We begin with the raw amino-acid sequence, 200 residues long: 2-phospho-L-lactate guanylyltransferase (200 aa).

The protein belongs to the CofC family. Homodimer.

It carries out the reaction (2S)-2-phospholactate + GTP + H(+) = (2S)-lactyl-2-diphospho-5'-guanosine + diphosphate. It functions in the pathway cofactor biosynthesis; coenzyme F420 biosynthesis. Functionally, guanylyltransferase that catalyzes the activation of (2S)-2-phospholactate (2-PL) as (2S)-lactyl-2-diphospho-5'-guanosine, via the condensation of 2-PL with GTP. It is involved in the biosynthesis of coenzyme F420, a hydride carrier cofactor. The protein is 2-phospho-L-lactate guanylyltransferase of Ferroglobus placidus (strain DSM 10642 / AEDII12DO).